Reading from the N-terminus, the 398-residue chain is Enoate reductase 1 (398 aa).

Residues T37 and H191 each coordinate FMN. The substrate site is built by H191 and N194. Catalysis depends on Y196, which acts as the Proton donor. The FMN site is built by R243 and R348. Residue Y375 participates in substrate binding.

The protein belongs to the NADH:flavin oxidoreductase/NADH oxidase family. Homodimer or heterodimer. Requires FMN as cofactor.

It carries out the reaction butanoate + NAD(+) = (2E)-2-butenoate + NADH + H(+). In terms of biological role, enoate reductase with broad substrate specificity for different alpha,beta-unsaturated carbonyl compounds. Prefers NADPH over NADH as cofactor. The sequence is that of Enoate reductase 1 (KYE1) from Kluyveromyces lactis (strain ATCC 8585 / CBS 2359 / DSM 70799 / NBRC 1267 / NRRL Y-1140 / WM37) (Yeast).